The sequence spans 115 residues: Movement protein TGB2 (115 aa).

Over 1–13 (MSAQGHRLTAPVN) the chain is Cytoplasmic. The helical transmembrane segment at 14 to 34 (SEKVYIVLGLSFALVSITFLL) threads the bilayer. Residues 35-74 (SRNSLPHVGDNIHSLPHGGAYRDGTKAILYNSPNLGSRVS) lie on the Lumenal side of the membrane. The helical transmembrane segment at 75–95 (LHNGKNAAFAAVLLLTLLIYG) threads the bilayer. Residues 96–115 (SKYISQRNHTCACGNNHSSH) lie on the Cytoplasmic side of the membrane.

Belongs to the Tymovirales TGBp2 protein family.

It is found in the host endoplasmic reticulum membrane. Its function is as follows. Plays a role in viral cell-to-cell propagation, by facilitating genome transport to neighboring plant cells through plasmosdesmata,. The sequence is that of Movement protein TGB2 from Potato virus X (PVX).